A 304-amino-acid polypeptide reads, in one-letter code: UDP-N-acetylenolpyruvoylglucosamine reductase (304 aa).

Positions 33 to 198 (RVGGPVDILL…ITATFCFESG (166 aa)) constitute an FAD-binding PCMH-type domain. The active site involves arginine 177. Serine 227 serves as the catalytic Proton donor. Glutamate 297 is a catalytic residue.

Belongs to the MurB family. It depends on FAD as a cofactor.

It localises to the cytoplasm. The catalysed reaction is UDP-N-acetyl-alpha-D-muramate + NADP(+) = UDP-N-acetyl-3-O-(1-carboxyvinyl)-alpha-D-glucosamine + NADPH + H(+). It participates in cell wall biogenesis; peptidoglycan biosynthesis. In terms of biological role, cell wall formation. The chain is UDP-N-acetylenolpyruvoylglucosamine reductase from Clostridium botulinum (strain Eklund 17B / Type B).